The chain runs to 180 residues: Geminin homolog (180 aa).

Over residues 1–27 the composition is skewed to polar residues; that stretch reads MSRIGLQQLNNSARNSPFGSEKATGTK. The interval 1–29 is disordered; it reads MSRIGLQQLNNSARNSPFGSEKATGTKQI.

It belongs to the geminin family. Homodimer. Interacts with cdt-1; the interaction most likely inhibits the ability of cdt-1 to load the mini-chromosome maintenance (MCM) complex onto DNA and therefore reduces DNA replication licensing activity. Interacts with nob-1 and ceh-32.

It is found in the cytoplasm. The protein resides in the nucleus. Inhibits DNA replication by binding to the DNA replication licensing factor cdt-1. Its interaction with cdt-1 prevents the cdt-1 loading of the mini-chromosome maintenance (MCM) complex onto DNA and therefore DNA replication licencing. This chain is Geminin homolog, found in Caenorhabditis elegans.